Reading from the N-terminus, the 445-residue chain is MATILQNLPIGQKVGIAFSGGLDTSAALHWMKLKGAIPYAYTANLGQPDEPDYEDIPRKAMQYGAEQARLIDCRSQLAAEGLAALQAGAFHITTAGVTYFNTTPLGRAVTGTMLVAAMKEDDVNIWGDGSTYKGNDIERFYRYGLLTNPSLKIYKPWLDQLFIDELGGRAEMSEFMTQAGFGYKMSAEKAYSTDSNMLGATHEAKDLEHLSSGMKIVNPIMGVAFWKDEVEVKREEVTVRFEEGRPVALNGVEYPDLVELILEANRIGGRHGLGMSDQIENRIIEAKSRGIYEAPGLALLFIAYERLVTGIHNEDTIEQYRDSGRRLGRLLYQGRWFDSQAIMLRETAQRWVASAITGEVTIELRRGNDYSILNTESANLTYQPERLSMEKVEGAFTPLDRIGQLTMRNLDIVDTRAKLGIYAKSGVLSLGTGGDLLNLTGKAAE.

Residues 17–25 (AFSGGLDTS) and Ala43 each bind ATP. Tyr99 is a binding site for L-citrulline. Residues Gly129 and Thr131 each coordinate ATP. Thr131, Asn135, and Asp136 together coordinate L-aspartate. L-citrulline is bound at residue Asn135. ATP is bound at residue Asp136. Residues Arg139 and Ser192 each coordinate L-citrulline. ATP is bound at residue Asp194. 3 residues coordinate L-citrulline: Thr201, Glu203, and Glu280.

It belongs to the argininosuccinate synthase family. Type 2 subfamily. As to quaternary structure, homotetramer.

It is found in the cytoplasm. It carries out the reaction L-citrulline + L-aspartate + ATP = 2-(N(omega)-L-arginino)succinate + AMP + diphosphate + H(+). Its pathway is amino-acid biosynthesis; L-arginine biosynthesis; L-arginine from L-ornithine and carbamoyl phosphate: step 2/3. The polypeptide is Argininosuccinate synthase (Polaromonas naphthalenivorans (strain CJ2)).